A 156-amino-acid chain; its full sequence is Ribosomal RNA large subunit methyltransferase H (156 aa).

Residues leucine 72, glycine 104, and 123–128 (LSEMTL) each bind S-adenosyl-L-methionine.

The protein belongs to the RNA methyltransferase RlmH family. In terms of assembly, homodimer.

It localises to the cytoplasm. It catalyses the reaction pseudouridine(1915) in 23S rRNA + S-adenosyl-L-methionine = N(3)-methylpseudouridine(1915) in 23S rRNA + S-adenosyl-L-homocysteine + H(+). In terms of biological role, specifically methylates the pseudouridine at position 1915 (m3Psi1915) in 23S rRNA. In Syntrophotalea carbinolica (strain DSM 2380 / NBRC 103641 / GraBd1) (Pelobacter carbinolicus), this protein is Ribosomal RNA large subunit methyltransferase H.